The following is a 140-amino-acid chain: RxLR effector protein CRE2 (140 aa).

The signal sequence occupies residues 1–24; it reads MRWLIWTAVSTLVMLLAMTEVSAS. The short motif at 56–72 is the RxLR-dEER element; it reads RSLRDKSSSLITESEER.

This sequence belongs to the RxLR effector family.

Its subcellular location is the secreted. It localises to the host cell. Effector that is involved in host plant infection. Contributes to virulence during the early infection stage, by inhibiting plant defense responses induced by both PAMP-triggered immunity (PTI) and effector-triggered immunity (ETI). In Phytophthora infestans (strain T30-4) (Potato late blight agent), this protein is RxLR effector protein CRE2.